Here is a 253-residue protein sequence, read N- to C-terminus: Sulfate transporter CysZ (253 aa).

4 consecutive transmembrane segments (helical) span residues 31 to 51, 75 to 95, 151 to 171, and 222 to 242; these read FVILPLLVNILLMGGAFWWLF, LLWPLAVISVLLVFGYFFSTI, IVLLILYFIPGIGQTVAPVLW, and IPLLNLFIMPVAVCGATAMWV.

This sequence belongs to the CysZ family.

The protein resides in the cell inner membrane. Its function is as follows. High affinity, high specificity proton-dependent sulfate transporter, which mediates sulfate uptake. Provides the sulfur source for the cysteine synthesis pathway. This Shigella dysenteriae serotype 1 (strain Sd197) protein is Sulfate transporter CysZ.